The sequence spans 304 residues: Protease HtpX homolog (304 aa).

2 helical membrane-spanning segments follow: residues 19–39 (FIVF…VSYF) and 41–61 (LGEI…YYAY). Histidine 146 contributes to the Zn(2+) binding site. Residue glutamate 147 is part of the active site. Residue histidine 150 participates in Zn(2+) binding. 2 helical membrane-spanning segments follow: residues 156–176 (VRLQ…GDGL) and 192–212 (NILG…ATLL). Glutamate 221 serves as a coordination point for Zn(2+).

The protein belongs to the peptidase M48B family. Requires Zn(2+) as cofactor.

The protein resides in the cell inner membrane. This Dictyoglomus turgidum (strain DSM 6724 / Z-1310) protein is Protease HtpX homolog.